An 863-amino-acid polypeptide reads, in one-letter code: Cilia- and flagella-associated protein 58 (863 aa).

2 coiled-coil regions span residues 107–600 (TVKE…NERD) and 631–815 (QSQY…KQVF). The tract at residues 836–863 (GPSLLDQLPGGSGTGSGGMATGGGVGMS) is disordered. Residues 845–863 (GGSGTGSGGMATGGGVGMS) show a composition bias toward gly residues.

The protein belongs to the CFAP58 family.

It is found in the cell projection. The protein localises to the cilium. The protein resides in the flagellum. The polypeptide is Cilia- and flagella-associated protein 58 (Chlamydomonas reinhardtii (Chlamydomonas smithii)).